An 83-amino-acid chain; its full sequence is Neurotoxin-1'' (83 aa).

The N-terminal stretch at 1–19 (MNYLVMISLALLLMIGVES) is a signal peptide. In terms of domain architecture, LCN-type CS-alpha/beta spans 21-82 (RDGYIVYPNN…PIKDTSRKCT (62 aa)). 4 cysteine pairs are disulfide-bonded: cysteine 31/cysteine 81, cysteine 35/cysteine 53, cysteine 39/cysteine 63, and cysteine 43/cysteine 65. A propeptide (removed by a carboxypeptidase (in neurotoxin-1/1')) is located at residue arginine 83.

Belongs to the long (4 C-C) scorpion toxin superfamily. Sodium channel inhibitor family. Alpha subfamily. Expressed by the venom gland.

It is found in the secreted. Functionally, alpha toxins bind voltage-independently at site-3 of sodium channels (Nav) and inhibit the inactivation of the activated channels, thereby blocking neuronal transmission. Is active against mammals and binds with high affinity rat brain synaptosomes. This is Neurotoxin-1'' from Androctonus australis (Sahara scorpion).